We begin with the raw amino-acid sequence, 912 residues long: Protein translocase subunit SecA (912 aa).

Residues glutamine 87, glycine 105–threonine 109, and aspartate 508 each bind ATP. The interval alanine 864–serine 912 is disordered. Zn(2+) contacts are provided by cysteine 896, cysteine 898, cysteine 907, and histidine 908. The segment covering lysine 902 to serine 912 has biased composition (basic residues).

This sequence belongs to the SecA family. In terms of assembly, monomer and homodimer. Part of the essential Sec protein translocation apparatus which comprises SecA, SecYEG and auxiliary proteins SecDF-YajC and YidC. It depends on Zn(2+) as a cofactor.

The protein localises to the cell inner membrane. It is found in the cytoplasm. It catalyses the reaction ATP + H2O + cellular proteinSide 1 = ADP + phosphate + cellular proteinSide 2.. Part of the Sec protein translocase complex. Interacts with the SecYEG preprotein conducting channel. Has a central role in coupling the hydrolysis of ATP to the transfer of proteins into and across the cell membrane, serving both as a receptor for the preprotein-SecB complex and as an ATP-driven molecular motor driving the stepwise translocation of polypeptide chains across the membrane. This chain is Protein translocase subunit SecA, found in Xanthomonas euvesicatoria pv. vesicatoria (strain 85-10) (Xanthomonas campestris pv. vesicatoria).